The sequence spans 222 residues: MVLRSEILVNKNVMPTAEQALPGRETPMSLPEFHYVFKDTPLLGPFFEGSIDFAIFGLGCFWGAERRFWQREGVVSTVVGYAGGFTPNPTYEEVCSGLTGHTEVVLVVFDKDKVSYRELLAMFWELHNPTQGMRQGNDVGTQYRSAIYCTSPQQLEEAKASRDAFQAELNKAGYGEITTEIDQAPTVYFAEAYHQQYLAKNPDGYCGIGGTGVCLPPSLQGN.

Cys-60 is an active-site residue.

It belongs to the MsrA Met sulfoxide reductase family.

It carries out the reaction L-methionyl-[protein] + [thioredoxin]-disulfide + H2O = L-methionyl-(S)-S-oxide-[protein] + [thioredoxin]-dithiol. The enzyme catalyses [thioredoxin]-disulfide + L-methionine + H2O = L-methionine (S)-S-oxide + [thioredoxin]-dithiol. Has an important function as a repair enzyme for proteins that have been inactivated by oxidation. Catalyzes the reversible oxidation-reduction of methionine sulfoxide in proteins to methionine. This is Peptide methionine sulfoxide reductase MsrA from Pseudomonas putida (strain W619).